The sequence spans 74 residues: ERTHTGEKPFECPECHKRFTRDHHLKTHMRLHTGEKPYHCSHCDRQFVQVANLRRHLRVHTGERPYACELCAAK.

4 consecutive C2H2-type zinc fingers follow at residues 1-4 (ERTH), 10-32 (FECP…MRLH), 38-60 (YHCS…LRVH), and 66-74 (YACELCAAK).

The protein belongs to the krueppel C2H2-type zinc-finger protein family.

Its subcellular location is the nucleus. Krueppel is a gap class segmentation protein. In Apis mellifera (Honeybee), this protein is Protein krueppel (Kr).